Here is a 448-residue protein sequence, read N- to C-terminus: Methylenetetrahydrofolate--tRNA-(uracil-5-)-methyltransferase TrmFO (448 aa).

Position 13 to 18 (13 to 18 (GAGLAG)) interacts with FAD.

This sequence belongs to the MnmG family. TrmFO subfamily. It depends on FAD as a cofactor.

It localises to the cytoplasm. The enzyme catalyses uridine(54) in tRNA + (6R)-5,10-methylene-5,6,7,8-tetrahydrofolate + NADH + H(+) = 5-methyluridine(54) in tRNA + (6S)-5,6,7,8-tetrahydrofolate + NAD(+). It catalyses the reaction uridine(54) in tRNA + (6R)-5,10-methylene-5,6,7,8-tetrahydrofolate + NADPH + H(+) = 5-methyluridine(54) in tRNA + (6S)-5,6,7,8-tetrahydrofolate + NADP(+). Functionally, catalyzes the folate-dependent formation of 5-methyl-uridine at position 54 (M-5-U54) in all tRNAs. This chain is Methylenetetrahydrofolate--tRNA-(uracil-5-)-methyltransferase TrmFO, found in Streptococcus pyogenes serotype M4 (strain MGAS10750).